Consider the following 495-residue polypeptide: Lysine--tRNA ligase (495 aa).

Residues Glu-406 and Glu-413 each contribute to the Mg(2+) site.

The protein belongs to the class-II aminoacyl-tRNA synthetase family. In terms of assembly, homodimer. Mg(2+) is required as a cofactor.

The protein resides in the cytoplasm. It carries out the reaction tRNA(Lys) + L-lysine + ATP = L-lysyl-tRNA(Lys) + AMP + diphosphate. The polypeptide is Lysine--tRNA ligase (Staphylococcus aureus (strain MRSA252)).